The chain runs to 172 residues: 3-hydroxydecanoyl-[acyl-carrier-protein] dehydratase (172 aa).

Residue His-71 is part of the active site.

The protein belongs to the thioester dehydratase family. FabA subfamily. In terms of assembly, homodimer.

It is found in the cytoplasm. It catalyses the reaction a (3R)-hydroxyacyl-[ACP] = a (2E)-enoyl-[ACP] + H2O. The enzyme catalyses (3R)-hydroxydecanoyl-[ACP] = (2E)-decenoyl-[ACP] + H2O. The catalysed reaction is (2E)-decenoyl-[ACP] = (3Z)-decenoyl-[ACP]. Its pathway is lipid metabolism; fatty acid biosynthesis. Necessary for the introduction of cis unsaturation into fatty acids. Catalyzes the dehydration of (3R)-3-hydroxydecanoyl-ACP to E-(2)-decenoyl-ACP and then its isomerization to Z-(3)-decenoyl-ACP. Can catalyze the dehydratase reaction for beta-hydroxyacyl-ACPs with saturated chain lengths up to 16:0, being most active on intermediate chain length. This is 3-hydroxydecanoyl-[acyl-carrier-protein] dehydratase from Salmonella agona (strain SL483).